We begin with the raw amino-acid sequence, 100 residues long: NADH-quinone oxidoreductase subunit K (100 aa).

3 helical membrane-spanning segments follow: residues 4 to 24, 29 to 49, and 63 to 83; these read ITYYLLLAAALFCMGMFGVLV, LVVFMSVELMLNAANLTFVAF, and FFVIAVAAAEAAIGLAIVIAV.

The protein belongs to the complex I subunit 4L family. NDH-1 is composed of 14 different subunits. Subunits NuoA, H, J, K, L, M, N constitute the membrane sector of the complex.

The protein resides in the cell inner membrane. The catalysed reaction is a quinone + NADH + 5 H(+)(in) = a quinol + NAD(+) + 4 H(+)(out). Functionally, NDH-1 shuttles electrons from NADH, via FMN and iron-sulfur (Fe-S) centers, to quinones in the respiratory chain. The immediate electron acceptor for the enzyme in this species is believed to be ubiquinone. Couples the redox reaction to proton translocation (for every two electrons transferred, four hydrogen ions are translocated across the cytoplasmic membrane), and thus conserves the redox energy in a proton gradient. This Myxococcus xanthus (strain DK1622) protein is NADH-quinone oxidoreductase subunit K.